The primary structure comprises 166 residues: Transcriptional repressor NrdR (166 aa).

The segment at 3–34 is a zinc-finger region; sequence CPFCGHDDTQVKDSRSTEDGVAIRRRRVCSAC. Residues 49–139 form the ATP-cone domain; the sequence is LSVTKADGRR…VYRDFREVEA (91 aa). The disordered stretch occupies residues 146–166; sequence DMKPIPGETDTPSPDDSQETP.

Belongs to the NrdR family. The cofactor is Zn(2+).

Its function is as follows. Negatively regulates transcription of bacterial ribonucleotide reductase nrd genes and operons by binding to NrdR-boxes. The sequence is that of Transcriptional repressor NrdR from Gluconobacter oxydans (strain 621H) (Gluconobacter suboxydans).